The following is a 207-amino-acid chain: Holliday junction branch migration complex subunit RuvA (207 aa).

Residues 1-65 (MYDYIRGVLT…ETEHVLYGFH (65 aa)) form a domain I region. The segment at 66–144 (TRGERECFRM…DLLPLDAQIL (79 aa)) is domain II. Positions 145–155 (ASWEPAKPSCM) are flexible linker. Residues 155–207 (MEEGIQALAALGYPKSSAERMIAEAMSELPDHASVAEILPIALKKNLQGLNKI) are domain III.

The protein belongs to the RuvA family. Homotetramer. Forms an RuvA(8)-RuvB(12)-Holliday junction (HJ) complex. HJ DNA is sandwiched between 2 RuvA tetramers; dsDNA enters through RuvA and exits via RuvB. An RuvB hexamer assembles on each DNA strand where it exits the tetramer. Each RuvB hexamer is contacted by two RuvA subunits (via domain III) on 2 adjacent RuvB subunits; this complex drives branch migration. In the full resolvosome a probable DNA-RuvA(4)-RuvB(12)-RuvC(2) complex forms which resolves the HJ.

It is found in the cytoplasm. Its function is as follows. The RuvA-RuvB-RuvC complex processes Holliday junction (HJ) DNA during genetic recombination and DNA repair, while the RuvA-RuvB complex plays an important role in the rescue of blocked DNA replication forks via replication fork reversal (RFR). RuvA specifically binds to HJ cruciform DNA, conferring on it an open structure. The RuvB hexamer acts as an ATP-dependent pump, pulling dsDNA into and through the RuvAB complex. HJ branch migration allows RuvC to scan DNA until it finds its consensus sequence, where it cleaves and resolves the cruciform DNA. This Chlamydia abortus (strain DSM 27085 / S26/3) (Chlamydophila abortus) protein is Holliday junction branch migration complex subunit RuvA.